The primary structure comprises 278 residues: S-formylglutathione hydrolase YeiG (278 aa).

Residues Ser145, Asp223, and His256 each act as charge relay system in the active site.

This sequence belongs to the esterase D family.

It catalyses the reaction S-formylglutathione + H2O = formate + glutathione + H(+). Functionally, serine hydrolase involved in the detoxification of formaldehyde. Hydrolyzes S-formylglutathione to glutathione and formate. This is S-formylglutathione hydrolase YeiG (yeiG) from Escherichia coli O139:H28 (strain E24377A / ETEC).